The primary structure comprises 399 residues: Pre-mycofactocin synthase (399 aa).

The FMN hydroxy acid dehydrogenase domain occupies 4–386 (ARDIWFETVA…VPEDILVPEG (383 aa)). The FMN site is built by Ser-111 and Gln-131. Tyr-133 is a binding site for a 2-oxocarboxylate. Position 159 (Thr-159) interacts with FMN. An a 2-oxocarboxylate-binding site is contributed by Arg-168. FMN is bound at residue Lys-257. Residue His-281 is the Proton acceptor of the active site. FMN is bound by residues 312–316 (DGGIR) and 335–336 (GR).

The protein belongs to the FMN-dependent alpha-hydroxy acid dehydrogenase family. It depends on FMN as a cofactor.

The catalysed reaction is 3-amino-5-[(4-hydroxyphenyl)methyl]-4,4-dimethyl-2-pyrrolidin-2-one + O2 + H2O = pre-mycofactocin + H2O2 + NH4(+). In terms of biological role, involved in the biosynthesis of the enzyme cofactor mycofactocin (MFT). Catalyzes the oxidative deamination of AHDP (3-amino-5-[(4-hydroxyphenyl)methyl]-4,4-dimethyl-2-pyrrolidin-2-one), forming an alpha-keto amide moiety on the resulting molecule, which is called pre-mycofactocin (PMFT). This reaction occurs via a 5-[(4-hydroxyphenyl)methyl]-3-imino-4,4-dimethylpyrrolidin-2-one intermediate, which converts to PMFT. The alpha-keto amide moiety is the redox-active center for the redox activity of mycofactocin. Is required for the in vivo ethanol assimilation in M.smegmatis. This Mycolicibacterium smegmatis (strain ATCC 700084 / mc(2)155) (Mycobacterium smegmatis) protein is Pre-mycofactocin synthase.